Here is a 322-residue protein sequence, read N- to C-terminus: Ribosomal RNA small subunit methyltransferase H (322 aa).

Residues 40-42 (GGH), aspartate 60, phenylalanine 84, aspartate 106, and glutamine 113 contribute to the S-adenosyl-L-methionine site.

Belongs to the methyltransferase superfamily. RsmH family.

The protein localises to the cytoplasm. The catalysed reaction is cytidine(1402) in 16S rRNA + S-adenosyl-L-methionine = N(4)-methylcytidine(1402) in 16S rRNA + S-adenosyl-L-homocysteine + H(+). Its function is as follows. Specifically methylates the N4 position of cytidine in position 1402 (C1402) of 16S rRNA. The sequence is that of Ribosomal RNA small subunit methyltransferase H from Aggregatibacter aphrophilus (strain NJ8700) (Haemophilus aphrophilus).